The sequence spans 109 residues: Large ribosomal subunit protein uL22 (109 aa).

The protein belongs to the universal ribosomal protein uL22 family. In terms of assembly, part of the 50S ribosomal subunit.

Its function is as follows. This protein binds specifically to 23S rRNA; its binding is stimulated by other ribosomal proteins, e.g. L4, L17, and L20. It is important during the early stages of 50S assembly. It makes multiple contacts with different domains of the 23S rRNA in the assembled 50S subunit and ribosome. Functionally, the globular domain of the protein is located near the polypeptide exit tunnel on the outside of the subunit, while an extended beta-hairpin is found that lines the wall of the exit tunnel in the center of the 70S ribosome. The chain is Large ribosomal subunit protein uL22 from Bordetella petrii (strain ATCC BAA-461 / DSM 12804 / CCUG 43448).